A 192-amino-acid polypeptide reads, in one-letter code: Ethylene-responsive transcription factor ERF027 (192 aa).

Positions Val-18–Pro-74 form a DNA-binding region, AP2/ERF. Disordered stretches follow at residues Cys-104–Asn-132 and Ala-167–Tyr-192. The span at Asp-179–Tyr-192 shows a compositional bias: acidic residues.

This sequence belongs to the AP2/ERF transcription factor family. ERF subfamily.

It localises to the nucleus. Functionally, probably acts as a transcriptional activator. Binds to the GCC-box pathogenesis-related promoter element. May be involved in the regulation of gene expression by stress factors and by components of stress signal transduction pathways. The sequence is that of Ethylene-responsive transcription factor ERF027 (ERF027) from Arabidopsis thaliana (Mouse-ear cress).